Consider the following 228-residue polypeptide: L-ornithine N5-acetyltransferase NATA1 (228 aa).

Residues 1–21 (MAPPTAAPEPNTVPETSPTGH) are disordered. The N-acetyltransferase domain maps to 77-227 (VFLLEISPSP…DALQAIDKLN (151 aa)). Residues 153-155 (IFM), 161-166 (RKGFGK), 192-195 (NVNA), and tyrosine 199 contribute to the acetyl-CoA site.

The protein belongs to the acetyltransferase family.

In terms of biological role, acetyltransferase that converts ornithine to N5-acetylornithine, which is likely used in plant defense. This is L-ornithine N5-acetyltransferase NATA1 (NATA1) from Arabidopsis thaliana (Mouse-ear cress).